Reading from the N-terminus, the 628-residue chain is FAD-linked oxidoreductase easE (628 aa).

The signal sequence occupies residues 1–20 (MSHRILCVAFCVCSLVAVSS). The FAD-binding PCMH-type domain maps to 144–328 (HQGRIPLYSA…TRATMRVHLN (185 aa)). H182 is subject to Pros-8alpha-FAD histidine. N-linked (GlcNAc...) asparagine glycosylation is found at N343, N382, and N487.

This sequence belongs to the oxygen-dependent FAD-linked oxidoreductase family. It depends on FAD as a cofactor.

The protein operates within alkaloid biosynthesis; ergot alkaloid biosynthesis. Functionally, FAD binding oxidoreductase; part of the gene cluster that mediates the biosynthesis of fumiclavanine C, a fungal ergot alkaloid. DmaW catalyzes the first step of ergot alkaloid biosynthesis by condensing dimethylallyl diphosphate (DMAP) and tryptophan to form 4-dimethylallyl-L-tryptophan. The second step is catalyzed by the methyltransferase easF that methylates 4-dimethylallyl-L-tryptophan in the presence of S-adenosyl-L-methionine, resulting in the formation of 4-dimethylallyl-L-abrine. The catalase easC and the FAD-dependent oxidoreductase easE then transform 4-dimethylallyl-L-abrine to chanoclavine-I which is further oxidized by EasD in the presence of NAD(+), resulting in the formation of chanoclavine-I aldehyde. EasA reduces chanoclavine-I aldehyde to dihydrochanoclavine-I aldehyde that spontaneously dehydrates to form 6,8-dimethyl-6,7-didehydroergoline. EasG then catalyzes the reduction of 6,8-dimethyl-6,7-didehydroergoline to form festuclavine. Hydrolysis of festuclavine by easM then leads to the formation of fumigaclavine B which is in turn acetylated by easN to fumigaclavine A. Finally, easL catalyzes the conversion of fumigaclavine A into fumigaclavine C by attaching a dimethylallyl moiety to C-2 of the indole nucleus. In Aspergillus fumigatus (strain ATCC MYA-4609 / CBS 101355 / FGSC A1100 / Af293) (Neosartorya fumigata), this protein is FAD-linked oxidoreductase easE.